The following is a 96-amino-acid chain: Molybdopterin synthase sulfur carrier subunit (96 aa).

Glycine 96 is subject to 1-thioglycine; alternate. Glycine 96 is modified (glycyl adenylate; alternate).

The protein belongs to the MoaD family. MOCS2A subfamily. Heterotetramer; composed of 2 small (MOCS2A) and 2 large (MOCS2B) subunits. Post-translationally, C-terminal thiocarboxylation occurs in 2 steps, it is first acyl-adenylated (-COAMP) via the hesA/moeB/thiF part of UBA4, then thiocarboxylated (-COSH) via the rhodanese domain of UBA4.

The protein resides in the cytoplasm. The protein operates within cofactor biosynthesis; molybdopterin biosynthesis. Functionally, acts as a sulfur carrier required for molybdopterin biosynthesis. Component of the molybdopterin synthase complex that catalyzes the conversion of precursor Z into molybdopterin by mediating the incorporation of 2 sulfur atoms into precursor Z to generate a dithiolene group. In the complex, serves as sulfur donor by being thiocarboxylated (-COSH) at its C-terminus by UBA4. After interaction with MOCS2B, the sulfur is then transferred to precursor Z to form molybdopterin. In Phaeosphaeria nodorum (strain SN15 / ATCC MYA-4574 / FGSC 10173) (Glume blotch fungus), this protein is Molybdopterin synthase sulfur carrier subunit.